The primary structure comprises 912 residues: WD repeat-containing protein 44 (912 aa).

A compositionally biased stretch (acidic residues) spans 1-14 (MASESDTEEFFDAP). A disordered region spans residues 1–25 (MASESDTEEFFDAPEDVHLEGGDPI). The residue at position 2 (Ala2) is an N-acetylalanine. The interval 2–170 (ASESDTEEFF…SSTAQLNVPE (169 aa)) is binding activity. At Ser3 the chain carries Phosphoserine. Residues 9-15 (EFFDAPE) carry the FFAT-like motif motif. A phosphoserine mark is found at Ser50, Ser66, Ser71, Ser81, Ser96, and Ser126. Disordered stretches follow at residues 79 to 104 (DDSL…GTEL) and 118 to 152 (QEDS…KPVD). A compositionally biased stretch (polar residues) spans 89-104 (QSDQATASPVTAGTEL). The residue at position 158 (Thr158) is a Phosphothreonine. Disordered regions lie at residues 183 to 202 (VKES…TKDF), 207 to 279 (EVAP…PKEN), 318 to 349 (QENG…ELTD), 396 to 422 (SNDA…RLKQ), and 457 to 479 (RDEV…MPYT). The interval 210 to 256 (PAKPPRQLTPEPDIVASTKKPVPARPPPPANFPPPRPPPPSRPAPPP) is important for interaction with ARHGAP26 AND ARHGAP10. Thr218 is modified (phosphothreonine). The span at 232 to 255 (PARPPPPANFPPPRPPPPSRPAPP) shows a compositional bias: pro residues. Ser261 is modified (phosphoserine). The segment covering 261 to 277 (SELEFEALKTPDLDVPK) has biased composition (basic and acidic residues). The residue at position 270 (Thr270) is a Phosphothreonine. Residues 333-346 (VMGPQRPRSNSGRE) form an important for interaction with RAB11A region. An interaction with RAB11 region spans residues 334–504 (MGPQRPRSNS…DFDQIKVVQD (171 aa)). A phosphoserine mark is found at Ser341 and Ser343. Thr348 is modified (phosphothreonine). Phosphoserine is present on residues Ser402, Ser469, Ser470, and Ser471. The segment covering 466–475 (DDPSSSDDEG) has biased composition (acidic residues). Tyr478 is subject to Phosphotyrosine. A WD 1 repeat occupies 508–547 (EHMGAVWTMKFSHCGRLLASAGQDNVVRIWALKNAFDYFN). The interval 556 to 592 (EGRVSPSPSQESLNSSKSDTDTGVCSGTDEDPDDKNA) is disordered. 2 positions are modified to phosphoserine: Ser560 and Ser564. Over residues 560-572 (SPSPSQESLNSSK) the composition is skewed to low complexity. WD repeat units lie at residues 604-642 (GHTA…CLCC), 644-684 (QHID…VALW), 689-728 (GQTK…YHTQ), 739-778 (KVGR…LSMK), 783-822 (VNSS…SKFT), and 871-912 (EDAE…KNLS).

In terms of assembly, interacts with the GTP-bound form of RAB11A when membrane-associated. Interacts with GRAF1/ARHGAP26 or GRAF2/ARHGAP10; the interaction connects the endoplasmic reticulum (ER) with the endosomal tubule. Interacts (via FFAT-like motif) with VAPA (via MSP domain) or VAPB (via MSP domain); the interaction connects the ER with the endosomal tubule. Does not bind to other Rab and Rho small G proteins. Post-translationally, phosphorylated by ATK1; the phosphorylation stabilizes its interaction with RAB11A and RAB11B. Highly expressed in brain.

It is found in the cytoplasm. The protein resides in the cytosol. It localises to the perinuclear region. The protein localises to the endosome membrane. Its subcellular location is the golgi apparatus. It is found in the trans-Golgi network. Downstream effector for Rab11 which regulates Rab11 intracellular membrane trafficking functions such as endocytic recycling, intracellular ciliogenesis and protein export. ATK1-mediated phosphorylation of WDR44 induces binding to Rab11 which activates endocytic recycling of transferrin receptor back to the plasma membrane. When bound to Rab11, prevents the formation of the ciliogenic Rab11-Rabin8/RAB3IP-RAB11FIP3 complex, therefore inhibiting preciliary trafficking and ciliogenesis. Participates in neo-synthesized protein export by connecting the endoplasmic reticulum (ER) with the endosomal tubule via direct interactions with the integral ER proteins VAPA or VAPB and the endosomal protein GRAFs (GRAF1/ARHGAP26 or GRAF2/ARHGAP10), which facilitates the transfer of proteins such as E-cadherin, MPP14 and CFTR into a Rab8-Rab10-Rab11-dependent export route. The polypeptide is WD repeat-containing protein 44 (WDR44) (Bos taurus (Bovine)).